Consider the following 422-residue polypeptide: UDP-N-acetylglucosamine 1-carboxyvinyltransferase (422 aa).

Residue 22–23 participates in phosphoenolpyruvate binding; that stretch reads KN. Arginine 94 contacts UDP-N-acetyl-alpha-D-glucosamine. Cysteine 118 acts as the Proton donor in catalysis. Position 118 is a 2-(S-cysteinyl)pyruvic acid O-phosphothioketal (cysteine 118). Residues 123–127, aspartate 308, and isoleucine 330 contribute to the UDP-N-acetyl-alpha-D-glucosamine site; that span reads RPVDL.

The protein belongs to the EPSP synthase family. MurA subfamily.

It is found in the cytoplasm. It catalyses the reaction phosphoenolpyruvate + UDP-N-acetyl-alpha-D-glucosamine = UDP-N-acetyl-3-O-(1-carboxyvinyl)-alpha-D-glucosamine + phosphate. It functions in the pathway cell wall biogenesis; peptidoglycan biosynthesis. In terms of biological role, cell wall formation. Adds enolpyruvyl to UDP-N-acetylglucosamine. The polypeptide is UDP-N-acetylglucosamine 1-carboxyvinyltransferase (Dinoroseobacter shibae (strain DSM 16493 / NCIMB 14021 / DFL 12)).